Consider the following 215-residue polypeptide: Cytochrome b6 (215 aa).

Residues 32–52 (IFYCLGGITLTCFLIQVATGF) traverse the membrane as a helical segment. Cys35 is a heme c binding site. Heme b-binding residues include His86 and His100. The next 3 helical transmembrane spans lie at 90 to 110 (ASMMVLMMILHVFRVYLTGGF), 116 to 136 (LTWVTGVILAVLTVSFGVTGY), and 186 to 206 (LHTFVLPLLTAVFMLMHFLMI). Positions 187 and 202 each coordinate heme b.

This sequence belongs to the cytochrome b family. PetB subfamily. In terms of assembly, the 4 large subunits of the cytochrome b6-f complex are cytochrome b6, subunit IV (17 kDa polypeptide, PetD), cytochrome f and the Rieske protein, while the 4 small subunits are PetG, PetL, PetM and PetN. The complex functions as a dimer. The cofactor is heme b. It depends on heme c as a cofactor.

It is found in the plastid. The protein localises to the chloroplast thylakoid membrane. In terms of biological role, component of the cytochrome b6-f complex, which mediates electron transfer between photosystem II (PSII) and photosystem I (PSI), cyclic electron flow around PSI, and state transitions. This chain is Cytochrome b6, found in Spirogyra maxima (Green alga).